The primary structure comprises 339 residues: DNA-directed RNA polymerase subunit alpha (339 aa).

The segment at 1–235 is alpha N-terminal domain (alpha-NTD); sequence MVIQKNWQEL…DQLQIFVNFE (235 aa). The alpha C-terminal domain (alpha-CTD) stretch occupies residues 251 to 339; sequence FNPALLKKVD…DLAKRFEEHY (89 aa).

Belongs to the RNA polymerase alpha chain family. Homodimer. The RNAP catalytic core consists of 2 alpha, 1 beta, 1 beta' and 1 omega subunit. When a sigma factor is associated with the core the holoenzyme is formed, which can initiate transcription.

It catalyses the reaction RNA(n) + a ribonucleoside 5'-triphosphate = RNA(n+1) + diphosphate. Its function is as follows. DNA-dependent RNA polymerase catalyzes the transcription of DNA into RNA using the four ribonucleoside triphosphates as substrates. The sequence is that of DNA-directed RNA polymerase subunit alpha from Methylobacterium nodulans (strain LMG 21967 / CNCM I-2342 / ORS 2060).